The chain runs to 501 residues: Calcium-dependent protein kinase 4 (501 aa).

One can recognise a Protein kinase domain in the interval 25 to 283 (YLLGKKLGQG…AHEALCHPWI (259 aa)). Residues 31-39 (LGQGQFGTT) and Lys54 contribute to the ATP site. Asp149 (proton acceptor) is an active-site residue. At Ser189 the chain carries Phosphoserine. The interval 289 to 319 (APDKPLDPAVLSRLKQFSQMNKIKKMALRVI) is autoinhibitory domain. EF-hand domains are found at residues 326–361 (EEIG…VGSE), 362–397 (LMES…INKM), 398–433 (EREE…FGLC), and 437–467 (LDDM…GDGV). Asp339, Asp341, Ser343, Thr345, Glu350, Asp375, Asp377, Ser379, Thr381, Glu386, Asp411, Asp413, Ser415, Tyr417, Glu422, Asp445, Asp447, Asp449, Lys451, and Glu456 together coordinate Ca(2+).

Belongs to the protein kinase superfamily. Ser/Thr protein kinase family. CDPK subfamily. In terms of assembly, interacts with Di19.

It localises to the cytoplasm. Its subcellular location is the nucleus. The catalysed reaction is L-seryl-[protein] + ATP = O-phospho-L-seryl-[protein] + ADP + H(+). It carries out the reaction L-threonyl-[protein] + ATP = O-phospho-L-threonyl-[protein] + ADP + H(+). Activated by calcium. Autophosphorylation may play an important role in the regulation of the kinase activity. May play a role in signal transduction pathways that involve calcium as a second messenger. Functions as a regulator of the calcium-mediated abscisic acid (ABA) signaling pathway. Phosphorylates ABA-responsive transcription factors ABF1 and ABF4 in vitro. Phosphorylates the nuclear zinc finger Di19 in vitro. The protein is Calcium-dependent protein kinase 4 (CPK4) of Arabidopsis thaliana (Mouse-ear cress).